Here is a 189-residue protein sequence, read N- to C-terminus: Effector protein NleF (189 aa).

The interaction with host caspases stretch occupies residues L186–G189.

Monomer. Interacts (via C-terminus) with human CASP4, CASP8 and CASP9.

It localises to the secreted. Its subcellular location is the host cytoplasm. Effector protein that alters host cell physiology and promotes bacterial survival in host tissues. Inhibits the catalytic activity of human CASP4, CASP8 and CASP9, and thereby inhibits apoptosis of infected host cells. This is Effector protein NleF (nleF) from Escherichia coli O157:H7.